A 143-amino-acid chain; its full sequence is Anti-sigma F factor (143 aa).

This sequence belongs to the anti-sigma-factor family.

The enzyme catalyses L-seryl-[protein] + ATP = O-phospho-L-seryl-[protein] + ADP + H(+). It carries out the reaction L-threonyl-[protein] + ATP = O-phospho-L-threonyl-[protein] + ADP + H(+). Its function is as follows. Binds to sigma F and blocks its ability to form an RNA polymerase holoenzyme (E-sigma F). Phosphorylates SpoIIAA on a serine residue. This phosphorylation may enable SpoIIAA to act as an anti-anti-sigma factor that counteracts SpoIIAB and thus releases sigma F from inhibition. The sequence is that of Anti-sigma F factor from Clostridium novyi (strain NT).